We begin with the raw amino-acid sequence, 268 residues long: Gasdermin bGSDM (268 aa).

Residue C3 is the site of S-palmitoyl cysteine attachment. 4 beta stranded membrane passes run 78–94, 103–121, 168–185, and 195–211; these read IDLR…AAKI, APSF…FHIE, KMRM…GVDV, and AKLE…RLVF. The segment at 248–268 is C-terminal region; that stretch reads GENMALNLFTEIQDAGFIEVT.

This sequence belongs to the bacterial gasdermin family. As to quaternary structure, monomer in solution. In terms of assembly, forms large, homooligomeric ring-shaped pores when inserted in membranes. Cleavage by the adjacently encoded protease (G563DRAFT_02009) between Leu-247 and Gly-248 relieves autoinhibition, releasing the N-terminus which initiates loss of cell integrity. Post-translationally, palmitoylation helps stabilize the inactive state; may self-palmitoylate. Palmitoylation is not required for permeabilization of liposomes by the ring-like pores in vitro. Palmitoylation plays a significant role in pore formation.

It is found in the cytoplasm. The protein localises to the cell inner membrane. With respect to regulation, the full-length protein before cleavage is inactive: intramolecular interactions between the N-terminal domain and the C-terminal region, as well as the lipid modification, mediate autoinhibition. The pyroptosis-like-inducing activity is carried by the released N-terminal domain (gasdermin bGSDM, N-terminus). Its function is as follows. Precursor of a pore-forming protein involved in defense against bacteriophages. Cleavage of this precursor by its dedicated, neighboring protease (G563DRAFT_02009) releases the active moiety (gasdermin bGSDM, N-terminus) which inserts into membranes, forming pores and triggering cell death. Expression of bGSDM and its protease is highly toxic in E.coli. Cells expressing the gene pair stop dividing and lose membrane integrity. Both proteins are required to kill E.coli. Functionally, pore-forming protein that causes membrane permeabilization via a pyroptosis-like activity. Makes ring-like pores with walls about 50 Angstroms thick and an interior pore diameter of 200-300 Angstroms, when integrated in liposomes. The polypeptide is Gasdermin bGSDM (Runella zeae (strain ATCC BAA-293 / DSM 19591 / LMG 21438 / NS12)).